Here is a 714-residue protein sequence, read N- to C-terminus: Fatty acid oxidation complex subunit alpha (714 aa).

Positions 1 to 190 (MEMTSAFTLN…KLGLVDDVVP (190 aa)) are enoyl-CoA hydratase. Residues 306 to 714 (APLNSVGILG…FWKTTATDLQ (409 aa)) are 3-hydroxyacyl-CoA dehydrogenase.

In the N-terminal section; belongs to the enoyl-CoA hydratase/isomerase family. It in the central section; belongs to the 3-hydroxyacyl-CoA dehydrogenase family. Heterotetramer of two alpha chains (FadJ) and two beta chains (FadI).

Its subcellular location is the cytoplasm. The catalysed reaction is a (3S)-3-hydroxyacyl-CoA = a (2E)-enoyl-CoA + H2O. The enzyme catalyses a 4-saturated-(3S)-3-hydroxyacyl-CoA = a (3E)-enoyl-CoA + H2O. It carries out the reaction a (3S)-3-hydroxyacyl-CoA + NAD(+) = a 3-oxoacyl-CoA + NADH + H(+). It catalyses the reaction (3S)-3-hydroxybutanoyl-CoA = (3R)-3-hydroxybutanoyl-CoA. It participates in lipid metabolism; fatty acid beta-oxidation. Its function is as follows. Catalyzes the formation of a hydroxyacyl-CoA by addition of water on enoyl-CoA. Also exhibits 3-hydroxyacyl-CoA epimerase and 3-hydroxyacyl-CoA dehydrogenase activities. This Escherichia coli (strain 55989 / EAEC) protein is Fatty acid oxidation complex subunit alpha.